The sequence spans 164 residues: NADH-quinone oxidoreductase subunit C (164 aa).

It belongs to the complex I 30 kDa subunit family. As to quaternary structure, NDH-1 is composed of 14 different subunits. Subunits NuoB, C, D, E, F, and G constitute the peripheral sector of the complex.

The protein resides in the cell inner membrane. The enzyme catalyses a quinone + NADH + 5 H(+)(in) = a quinol + NAD(+) + 4 H(+)(out). NDH-1 shuttles electrons from NADH, via FMN and iron-sulfur (Fe-S) centers, to quinones in the respiratory chain. The immediate electron acceptor for the enzyme in this species is believed to be ubiquinone. Couples the redox reaction to proton translocation (for every two electrons transferred, four hydrogen ions are translocated across the cytoplasmic membrane), and thus conserves the redox energy in a proton gradient. This Geotalea uraniireducens (strain Rf4) (Geobacter uraniireducens) protein is NADH-quinone oxidoreductase subunit C.